The following is a 113-amino-acid chain: MQPGGQPDMSQLLAQAQQMQQQLMAAQQEMAEAEVTGQAGGGLVTATVKGTGEVVGLKIDPKVVDPDDVETLQDLVIGAIEDASSKAQEIAAQKLGPLAGGFGGGGLPGLPGF.

This sequence belongs to the YbaB/EbfC family. Homodimer.

It localises to the cytoplasm. Its subcellular location is the nucleoid. Binds to DNA and alters its conformation. May be involved in regulation of gene expression, nucleoid organization and DNA protection. The polypeptide is Nucleoid-associated protein ROP_41370 (Rhodococcus opacus (strain B4)).